Here is a 303-residue protein sequence, read N- to C-terminus: UDP-N-acetylenolpyruvoylglucosamine reductase (303 aa).

The region spanning 30-196 (IGGPADLLII…LEAVFKLKQD (167 aa)) is the FAD-binding PCMH-type domain. The active site involves Arg174. Residue Ser225 is the Proton donor of the active site. Glu295 is a catalytic residue.

Belongs to the MurB family. FAD is required as a cofactor.

Its subcellular location is the cytoplasm. It catalyses the reaction UDP-N-acetyl-alpha-D-muramate + NADP(+) = UDP-N-acetyl-3-O-(1-carboxyvinyl)-alpha-D-glucosamine + NADPH + H(+). Its pathway is cell wall biogenesis; peptidoglycan biosynthesis. Cell wall formation. The chain is UDP-N-acetylenolpyruvoylglucosamine reductase from Bacillus pumilus (strain SAFR-032).